The sequence spans 165 residues: Nucleotide-binding protein LBF_1338 (165 aa).

The protein belongs to the YajQ family.

Its function is as follows. Nucleotide-binding protein. The chain is Nucleotide-binding protein LBF_1338 from Leptospira biflexa serovar Patoc (strain Patoc 1 / Ames).